We begin with the raw amino-acid sequence, 638 residues long: Bifunctional protein glk (638 aa).

The disordered stretch occupies residues 1-20 (MSTGVQTKAAPGAGQHADGP). A glucokinase region spans residues 1–341 (MSTGVQTKAA…QLSNRAGGSS (341 aa)). 24 to 29 (ADIGGT) lines the ATP pocket. Positions 342 to 418 (SAVFERIRQM…LKLATGLTGT (77 aa)) constitute an HTH rpiR-type domain. Residues 342–638 (SAVFERIRQM…SHGAASSARD (297 aa)) form a putative HTH-type transcriptional regulator region. The H-T-H motif DNA-binding region spans 378 to 397 (IVDIARKADVSQPTVIRFCR). Positions 462-601 (AIDLLNGARR…AVGVAIRRAV (140 aa)) constitute an SIS domain.

This sequence in the N-terminal section; belongs to the bacterial glucokinase family.

It is found in the cytoplasm. It carries out the reaction D-glucose + ATP = D-glucose 6-phosphate + ADP + H(+). This is Bifunctional protein glk (glk) from Paraburkholderia xenovorans (strain LB400).